Consider the following 595-residue polypeptide: Aspartate--tRNA(Asp/Asn) ligase (595 aa).

Residue glutamate 175 coordinates L-aspartate. An aspartate region spans residues 199–202 (QQYK). L-aspartate-binding residues include arginine 221 and histidine 454. 221-223 (RDE) contacts ATP. ATP is bound at residue glutamate 488. Arginine 495 is a binding site for L-aspartate. 540–543 (GIDR) contacts ATP.

The protein belongs to the class-II aminoacyl-tRNA synthetase family. Type 1 subfamily. As to quaternary structure, homodimer.

Its subcellular location is the cytoplasm. It carries out the reaction tRNA(Asx) + L-aspartate + ATP = L-aspartyl-tRNA(Asx) + AMP + diphosphate. Functionally, aspartyl-tRNA synthetase with relaxed tRNA specificity since it is able to aspartylate not only its cognate tRNA(Asp) but also tRNA(Asn). Reaction proceeds in two steps: L-aspartate is first activated by ATP to form Asp-AMP and then transferred to the acceptor end of tRNA(Asp/Asn). The polypeptide is Aspartate--tRNA(Asp/Asn) ligase (Sinorhizobium fredii (strain NBRC 101917 / NGR234)).